The following is a 359-amino-acid chain: 4-galactosyl-N-acetylglucosaminide 3-alpha-L-fucosyltransferase 9 (359 aa).

Residues 1 to 11 lie on the Cytoplasmic side of the membrane; it reads MTSASKGILRP. A helical; Signal-anchor for type II membrane protein transmembrane segment spans residues 12–32; sequence FLIVCIILACSMVCLFIYIKP. Over 33-359 the chain is Lumenal; sequence TNSWIFSPME…VGNLEKWFWN (327 aa). Residue N62 is glycosylated (N-linked (GlcNAc...) asparagine). The segment at 63–168 is acceptor-binding; it reads ETTILIWVWP…RRDSDIQVPY (106 aa). Position 75 (Q75) interacts with a beta-D-galactosyl-(1-&gt;4)-N-acetyl-beta-D-glucosaminyl derivative. 3 disulfide bridges follow: C82–C335, C91–C338, and C190–C238. Residue N101 is glycosylated (N-linked (GlcNAc...) asparagine). E137 contacts a beta-D-galactosyl-(1-&gt;4)-N-acetyl-beta-D-glucosaminyl derivative. The active-site Nucleophile is E137. E137 contributes to the GDP-beta-L-fucose binding site. N153 carries N-linked (GlcNAc...) asparagine glycosylation. GDP-beta-L-fucose is bound by residues Y168, V192, S194, N195, R202, V226, Y241, N246, Y252, E255, and K256. Positions 169–326 are donor-binding; sequence GFLTVSTNPF…NWRKDFTVNL (158 aa). The interval 327–359 is acceptor-binding; that stretch reads PRFWESHACLACDHVKRHQEYKSVGNLEKWFWN.

This sequence belongs to the glycosyltransferase 10 family. In terms of assembly, homodimer. N-glycosylated with complex-type N-glycans.

Its subcellular location is the golgi apparatus. The protein localises to the trans-Golgi network membrane. The protein resides in the golgi apparatus membrane. It carries out the reaction a beta-D-galactosyl-(1-&gt;4)-N-acetyl-beta-D-glucosaminyl derivative + GDP-beta-L-fucose = a beta-D-galactosyl-(1-&gt;4)-[alpha-L-fucosyl-(1-&gt;3)]-N-acetyl-beta-D-glucosaminyl derivative + GDP + H(+). The enzyme catalyses an alpha-Neu5Ac-(2-&gt;3)-beta-D-Gal-(1-&gt;4)-beta-D-GlcNAc-(1-&gt;3)-beta-D-Gal-(1-&gt;4)-beta-D-GlcNAc derivative + GDP-beta-L-fucose = an alpha-Neu5Ac-(2-&gt;3)-beta-D-Gal-(1-&gt;4)-beta-D-GlcNAc-(1-&gt;3)-beta-D-Gal-(1-&gt;4)-[alpha-L-Fuc-(1-&gt;3)]-beta-D-GlcNAc derivative + GDP + H(+). The catalysed reaction is alpha-N-glycoloylneuraminosyl-(2-&gt;3)-beta-D-galactosyl-(1-&gt;4)-N-acetyl-beta-D-glucosaminyl-(1-&gt;3)-beta-D-galactosyl-(1-&gt;4)-N-acetyl-beta-D-glucosaminyl-(1-&gt;3)-beta-D-galactosyl-(1-&gt;4)-beta-D-glucosyl-(1&lt;-&gt;1')-ceramide + GDP-beta-L-fucose = alpha-N-glycoloylneuraminosyl-(2-&gt;3)-beta-D-galactosyl-(1-&gt;4)-N-acetyl-beta-D-glucosaminyl-(1-&gt;3)-beta-D-galactosyl-(1-&gt;4)-[alpha-L-fucosyl-(1-&gt;3)]-N-acetyl-beta-D-glucosaminyl-(1-&gt;3)-beta-D-galactosyl-(1-&gt;4)-beta-D-glucosyl-(1&lt;-&gt;1')-ceramide + GDP + H(+). It catalyses the reaction alpha-D-galactosyl-(1-&gt;3)-beta-D-galactosyl-(1-&gt;4)-N-acetyl-beta-D-glucosaminyl-(1-&gt;3)-beta-D-galactosyl-(1-&gt;4)-beta-D-glucosyl-(1&lt;-&gt;1')-ceramide + GDP-beta-L-fucose = a neolactoside IV(3)-alpha-Gal,III(3)-alpha-Fuc-nLc4Cer + GDP + H(+). It carries out the reaction a neolactoside nLc4Cer + GDP-beta-L-fucose = a neolactoside III(3)-alpha-Fuc-nLc4Cer + GDP + H(+). The enzyme catalyses an N-acetyl-alpha-neuraminyl-(2-&gt;3)-beta-D-galactosyl-(1-&gt;4)-N-acetyl-beta-D-glucosaminyl derivative + GDP-beta-L-fucose = an alpha-Neu5Ac-(2-&gt;3)-beta-D-Gal-(1-&gt;4)-[alpha-L-Fuc-(1-&gt;3)]-beta-D-GlcNAc derivative + GDP + H(+). The catalysed reaction is beta-D-Gal-(1-&gt;4)-beta-D-GlcNAc-(1-&gt;3)-beta-D-Gal-(1-&gt;4)-D-Glc + GDP-beta-L-fucose = beta-D-Gal-(1-&gt;4)-[alpha-L-Fuc-(1-&gt;3)]-beta-D-GlcNAc-(1-&gt;3)-beta-D-Gal-(1-&gt;4)-D-Glc + GDP + H(+). It catalyses the reaction an alpha-L-Fuc-(1-&gt;2)-beta-D-Gal-(1-&gt;4)-beta-D-GlcNAc derivative + GDP-beta-L-fucose = an alpha-L-Fuc-(1-&gt;2)-beta-D-Gal-(1-&gt;4)-[alpha-L-Fuc-(1-&gt;3)]-beta-D-GlcNAc derivative + GDP + H(+). It functions in the pathway protein modification; protein glycosylation. The protein operates within glycolipid biosynthesis. With respect to regulation, activated by Mn2+. Functionally, catalyzes alpha(1-&gt;3) linkage of fucosyl moiety transferred from GDP-beta-L-fucose to N-acetyl glucosamine (GlcNAc) within type 2 lactosamine (LacNAc, beta-D-Gal-(1-&gt;4)-beta-D-GlcNAc-) glycan attached to glycolipids and N- or O-linked glycoproteins. Fucosylates distal type 2 LacNAc and its fucosylated (H-type 2 LacNAc) and sialylated (sialyl-type 2 LacNAc) derivatives to form Lewis x (Lex) (CD15) and Lewis y (Ley) antigenic epitopes involved in cell adhesion and differentiation. Generates Lex epitopes in the brain, presumably playing a role in the maintenance of neuronal stemness and neurite outgrowth in progenitor neural cells. Fucosylates the internal type 2 LacNAc unit of the polylactosamine chain to form VIM-2 antigen that serves as recognition epitope for SELE. Can also modify milk oligosaccharides in particular type 2 tetrasaccharide LNnT. This is 4-galactosyl-N-acetylglucosaminide 3-alpha-L-fucosyltransferase 9 from Bos taurus (Bovine).